Consider the following 382-residue polypeptide: Queuine tRNA-ribosyltransferase (382 aa).

Asp-96 acts as the Proton acceptor in catalysis. Substrate-binding positions include 96–100 (DSGGF), Asp-151, Gln-194, and Gly-221. The tract at residues 252 to 258 (GVGAPDS) is RNA binding. Residue Asp-271 is the Nucleophile of the active site. The RNA binding; important for wobble base 34 recognition stretch occupies residues 276–280 (TRIAR). 4 residues coordinate Zn(2+): Cys-309, Cys-311, Cys-314, and His-340.

It belongs to the queuine tRNA-ribosyltransferase family. Homodimer. Within each dimer, one monomer is responsible for RNA recognition and catalysis, while the other monomer binds to the replacement base PreQ1. Requires Zn(2+) as cofactor.

The enzyme catalyses 7-aminomethyl-7-carbaguanine + guanosine(34) in tRNA = 7-aminomethyl-7-carbaguanosine(34) in tRNA + guanine. It functions in the pathway tRNA modification; tRNA-queuosine biosynthesis. Its function is as follows. Catalyzes the base-exchange of a guanine (G) residue with the queuine precursor 7-aminomethyl-7-deazaguanine (PreQ1) at position 34 (anticodon wobble position) in tRNAs with GU(N) anticodons (tRNA-Asp, -Asn, -His and -Tyr). Catalysis occurs through a double-displacement mechanism. The nucleophile active site attacks the C1' of nucleotide 34 to detach the guanine base from the RNA, forming a covalent enzyme-RNA intermediate. The proton acceptor active site deprotonates the incoming PreQ1, allowing a nucleophilic attack on the C1' of the ribose to form the product. After dissociation, two additional enzymatic reactions on the tRNA convert PreQ1 to queuine (Q), resulting in the hypermodified nucleoside queuosine (7-(((4,5-cis-dihydroxy-2-cyclopenten-1-yl)amino)methyl)-7-deazaguanosine). In Lactococcus lactis subsp. cremoris (strain SK11), this protein is Queuine tRNA-ribosyltransferase.